Here is an 89-residue protein sequence, read N- to C-terminus: MALTKERKNEIIEAYATKQGDTGSPEVQVAVLTEQITTLNDHLRTHKKDHHSRRGLLKMVGRRRNLLTYLRNKDVSRYRSLIERLGLRR.

The protein belongs to the universal ribosomal protein uS15 family. In terms of assembly, part of the 30S ribosomal subunit. Forms a bridge to the 50S subunit in the 70S ribosome, contacting the 23S rRNA.

Its function is as follows. One of the primary rRNA binding proteins, it binds directly to 16S rRNA where it helps nucleate assembly of the platform of the 30S subunit by binding and bridging several RNA helices of the 16S rRNA. Functionally, forms an intersubunit bridge (bridge B4) with the 23S rRNA of the 50S subunit in the ribosome. The protein is Small ribosomal subunit protein uS15 of Exiguobacterium sibiricum (strain DSM 17290 / CCUG 55495 / CIP 109462 / JCM 13490 / 255-15).